The sequence spans 843 residues: Protein translocase subunit SecA 1 (843 aa).

ATP-binding positions include Gln-91, 109–113, and Asp-498; that span reads GEGKT. The segment covering 799–813 has biased composition (basic and acidic residues); it reads EAKHVSAEDGKEKVK. Residues 799–826 are disordered; it reads EAKHVSAEDGKEKVKPKPIVKGDQVGRN. Positions 829, 831, 840, and 841 each coordinate Zn(2+).

The protein belongs to the SecA family. As to quaternary structure, monomer and homodimer. Part of the essential Sec protein translocation apparatus which comprises SecA, SecYEG and auxiliary proteins SecDF. Other proteins may also be involved. Zn(2+) is required as a cofactor.

It is found in the cell membrane. Its subcellular location is the cytoplasm. It catalyses the reaction ATP + H2O + cellular proteinSide 1 = ADP + phosphate + cellular proteinSide 2.. In terms of biological role, part of the Sec protein translocase complex. Interacts with the SecYEG preprotein conducting channel. Has a central role in coupling the hydrolysis of ATP to the transfer of proteins into and across the cell membrane, serving as an ATP-driven molecular motor driving the stepwise translocation of polypeptide chains across the membrane. The protein is Protein translocase subunit SecA 1 of Staphylococcus aureus (strain MRSA252).